The primary structure comprises 334 residues: N-acetyl-gamma-glutamyl-phosphate reductase (334 aa).

Residue cysteine 154 is part of the active site.

The protein belongs to the NAGSA dehydrogenase family. Type 1 subfamily.

The protein resides in the cytoplasm. The enzyme catalyses N-acetyl-L-glutamate 5-semialdehyde + phosphate + NADP(+) = N-acetyl-L-glutamyl 5-phosphate + NADPH + H(+). Its pathway is amino-acid biosynthesis; L-arginine biosynthesis; N(2)-acetyl-L-ornithine from L-glutamate: step 3/4. Catalyzes the NADPH-dependent reduction of N-acetyl-5-glutamyl phosphate to yield N-acetyl-L-glutamate 5-semialdehyde. The sequence is that of N-acetyl-gamma-glutamyl-phosphate reductase from Buchnera aphidicola subsp. Acyrthosiphon pisum (strain Tuc7).